Reading from the N-terminus, the 657-residue chain is LIM and SH3 domain protein Lasp (657 aa).

The 61-residue stretch at 3–63 (KTCARCQKVV…EAHIPKAKAT (61 aa)) folds into the LIM zinc-binding domain. Nebulin repeat units follow at residues 64-95 (AIADTPELKRIAENTKIQSNVKYHADFEKAKG) and 96-130 (KFTQVADDPETLRIKQNTKHISNVAYHGDLEKKAA). Disordered stretches follow at residues 130-151 (AMEKQRGSAEVSDSSNESEYFS), 164-223 (PTAS…PIQH), 235-257 (YQQLQQQQQQQQQQRAQQQQLHD), 294-318 (LYPTATSQQQQMPPPQSPANPQQQA), 332-415 (NSHH…SAAS), and 460-528 (KQHA…PKRI). Residues 140–150 (VSDSSNESEYF) show a composition bias toward polar residues. 2 stretches are compositionally biased toward low complexity: residues 172-215 (AATT…QQQT) and 236-254 (QQLQQQQQQQQQQRAQQQQ). The span at 332–341 (NSHHPSGNSV) shows a compositional bias: polar residues. Over residues 342 to 357 (DQYDQPQQQQHQPQQQ) the composition is skewed to low complexity. Over residues 358 to 370 (STNPTLVAAQQQQ) the composition is skewed to polar residues. The segment covering 371-403 (SHHSLLNNNASNGGISHSHHSNINNNGHGSQNQ) has biased composition (low complexity). Polar residues predominate over residues 460 to 475 (KQHASNGHMPNQQQQH). Phosphoserine is present on residues S505 and S530. Residues 548–592 (EQAHQQQKHQQYYQQVQMMQQQEHPPQQQQMRQQPSYSSLQEKQS) are disordered. Residues 549 to 586 (QAHQQQKHQQYYQQVQMMQQQEHPPQQQQMRQQPSYSS) are compositionally biased toward low complexity. Residues 596–657 (TAMRVYRAIY…PANYVEQAVI (62 aa)) enclose the SH3 domain.

As to quaternary structure, interacts with osk.

The protein is LIM and SH3 domain protein Lasp of Drosophila melanogaster (Fruit fly).